A 384-amino-acid chain; its full sequence is tRNA-specific 2-thiouridylase MnmA (384 aa).

Residues 29–36 and Leu-55 contribute to the ATP site; that span reads AMSGGVDS. Cys-123 serves as the catalytic Nucleophile. Cysteines 123 and 220 form a disulfide. Gly-147 is a binding site for ATP. An interaction with tRNA region spans residues 169-171; it reads RDQ. Residue Cys-220 is the Cysteine persulfide intermediate of the active site.

This sequence belongs to the MnmA/TRMU family.

The protein resides in the cytoplasm. It carries out the reaction S-sulfanyl-L-cysteinyl-[protein] + uridine(34) in tRNA + AH2 + ATP = 2-thiouridine(34) in tRNA + L-cysteinyl-[protein] + A + AMP + diphosphate + H(+). Its function is as follows. Catalyzes the 2-thiolation of uridine at the wobble position (U34) of tRNA, leading to the formation of s(2)U34. The sequence is that of tRNA-specific 2-thiouridylase MnmA from Dinoroseobacter shibae (strain DSM 16493 / NCIMB 14021 / DFL 12).